The following is a 172-amino-acid chain: Conglutin-7 (172 aa).

The signal sequence occupies residues 1 to 21 (MAKLTILVALALFLLAAHASA). Intrachain disulfides connect C33–C116, C45–C103, C104–C152, and C118–C160. Positions 54–98 (QRDEDSYGRDPYSPSQDPYSPSQDPDRRDPYSPSPYDRRGAGSSQ) are disordered. Residues 62–76 (RDPYSPSQDPYSPSQ) show a composition bias toward low complexity. 4-hydroxyproline is present on residues P67, P74, and P86. Positions 77–98 (DPDRRDPYSPSPYDRRGAGSSQ) are enriched in basic and acidic residues.

This sequence belongs to the 2S seed storage albumins family. The hydroxyproline modifications determined by mass spectrometry are probably 4-hydroxyproline as determined for other extracellular plant proteins. Expressed in seeds, not expressed in leaves, roots and pegs.

Its function is as follows. Weak inhibitor of trypsin. The sequence is that of Conglutin-7 from Arachis hypogaea (Peanut).